We begin with the raw amino-acid sequence, 333 residues long: Homeobox protein HMX1 (333 aa).

Disordered stretches follow at residues 1–74 (MAQD…STSA), 86–109 (GTEG…APRC), and 139–204 (CASP…KKKT). Residues 17-30 (DYTQGNTDRSTAAA) show a composition bias toward polar residues. The segment covering 87–105 (TEGGGGTRRAAAGGGGGRG) has biased composition (gly residues). Positions 144-158 (TSDRDSPELPEDTER) are enriched in basic and acidic residues. The segment covering 159-176 (AGGGGRAAARGPAGGRQS) has biased composition (gly residues). Residues 181–192 (EEEEERGEEAGE) show a composition bias toward acidic residues. The segment at residues 201–260 (KKKTRTVFSRSQVFQLESTFDVKRYLSSSERAGLAASLHLTETQVKIWFQNRRNKWKRQL) is a DNA-binding region (homeobox). The short motif at 261-271 (AADLEAANLSH) is the HMX family specific domain 1 element.

The protein belongs to the HMX homeobox family.

It is found in the nucleus. DNA-binding protein that binds to the 5'-CAAG-3' core sequence. May function as a transcriptional repressor. Seems to act as a transcriptional antagonist of NKX2-5. May play an important role in the development of craniofacial structures such as the eye and ear. This chain is Homeobox protein HMX1 (HMX1), found in Gallus gallus (Chicken).